Consider the following 1985-residue polypeptide: Voltage-dependent L-type calcium channel subunit alpha-1F (1985 aa).

Basic and acidic residues predominate over residues 1-11; the sequence is MSESEVGKDTT. Positions 1–56 are disordered; that stretch reads MSESEVGKDTTPEPSPANGTGPGPEWGLCPGPPTVGTDTSGASGLGTPRRRTQHNK. Topologically, residues 1–92 are cytoplasmic; that stretch reads MSESEVGKDT…RSCISIVEWK (92 aa). The stretch at 79–375 is one I repeat; it reads NPIRRSCISI…LVLGVLSGEF (297 aa). The chain crosses the membrane as a helical span at residues 93 to 111; that stretch reads PFDILILLTIFANCVALGV. Over 112 to 129 the chain is Extracellular; that stretch reads YIPFPEDDSNTANHNLEQ. The helical transmembrane segment at 130–149 threads the bilayer; the sequence is VEYVFLVIFTVETVLKIVAY. The Cytoplasmic segment spans residues 150-161; it reads GLVLHPSAYIRN. A helical membrane pass occupies residues 162 to 180; sequence GWNLLDFIIVVVGLFSVLL. The Extracellular segment spans residues 181 to 201; the sequence is EQGPGRPGDAPHTGGKPGGFD. Residues 202 to 220 traverse the membrane as a helical segment; the sequence is VKALRAFRVLRPLRLVSGV. Residues 221–239 are Cytoplasmic-facing; it reads PSLHIVVNSIMKALVPLLH. The helical transmembrane segment at 240 to 259 threads the bilayer; it reads IALLVLFVIIIYAIIGLELF. Topologically, residues 260-347 are extracellular; that stretch reads LGRMHKTCYF…WMQDAMGYEL (88 aa). The N-linked (GlcNAc...) asparagine glycan is linked to Asn295. Glu330 provides a ligand contact to Ca(2+). The helical transmembrane segment at 348–372 threads the bilayer; the sequence is PWVYFVSLVIFGSFFVLNLVLGVLS. Residues 373–529 lie on the Cytoplasmic side of the membrane; sequence GEFSKEREKA…ARCRRAVKSN (157 aa). The interval 395–412 is binding to the beta subunit; the sequence is QQMEEDLRGYLDWITQAE. The span at 455–469 shows a compositional bias: low complexity; the sequence is SHSTRSTHSTSSHAS. The tract at residues 455-490 is disordered; the sequence is SHSTRSTHSTSSHASLPASDTGSMTDTPGDEDEEEG. Residues 515–761 form an II repeat; the sequence is NRGLRARCRR…VFLAIAVDNL (247 aa). Residues 530-549 form a helical membrane-spanning segment; that stretch reads ACYWAVLLLVFLNTLTIASE. Topologically, residues 550–564 are extracellular; it reads HHGQPLWLTQTQEYA. A helical transmembrane segment spans residues 565–583; it reads NKVLLCLFTVEMLLKLYGL. Topologically, residues 584 to 591 are cytoplasmic; that stretch reads GPSVYVAS. A helical membrane pass occupies residues 592-610; it reads FFNRFDCFVVCGGILETTL. Topologically, residues 611-620 are extracellular; it reads VEVGAMQPLG. Residues 621–639 traverse the membrane as a helical segment; that stretch reads ISVLRCVRLLRIFKVTRHW. Residues 640 to 658 lie on the Cytoplasmic side of the membrane; it reads ASLSNLVASLLNSMKSIAS. Residues 659-679 form a helical membrane-spanning segment; that stretch reads LLLLLFLFIIIFSLLGMQLFG. The Extracellular portion of the chain corresponds to 680–733; it reads GKFNFDQTHTKRSTFDTFPQALLTVFQILTGEDWNVVMYDGIMAYGGPFFPGML. Glu711 is a Ca(2+) binding site. Residues 734 to 758 form a helical membrane-spanning segment; the sequence is VCVYFIILFICGNYILLNVFLAIAV. At 759-876 the chain is on the cytoplasmic side; it reads DNLASGDAGT…KACHTLIHHH (118 aa). The interval 766-834 is disordered; the sequence is AGTAKDKGRE…EEEEENGAGH (69 aa). The span at 768–787 shows a compositional bias: basic and acidic residues; the sequence is TAKDKGREKSSEGNPPKENK. Acidic residues predominate over residues 810–830; the sequence is MEEEEEEEEEEEEEEEEEEEN. The III repeat unit spans residues 858 to 1140; that stretch reads CLSQTNPLRK…FFMMNIFVGF (283 aa). The chain crosses the membrane as a helical span at residues 877 to 895; the sequence is IFTSLILVFIILSSVSLAA. Topologically, residues 896–911 are extracellular; that stretch reads EDPIRAHSFRNHILGY. The helical transmembrane segment at 912 to 931 threads the bilayer; sequence FDYAFTSIFTVEILLKMTVF. Topologically, residues 932-943 are cytoplasmic; sequence GAFLHRGSFCRS. The helical transmembrane segment at 944–962 threads the bilayer; sequence WFNLLDLLVVSVSLISFGI. Residues 963–968 lie on the Extracellular side of the membrane; that stretch reads HSSAIS. A helical transmembrane segment spans residues 969-988; it reads VVKILRVLRVLRPLRAINRA. The Cytoplasmic portion of the chain corresponds to 989 to 1007; the sequence is KGLKHVVQCVFVAIRTIGN. Residues 1008–1027 traverse the membrane as a helical segment; that stretch reads IMIVTTLLQFMFACIGVQLF. Residues 1028-1117 lie on the Extracellular side of the membrane; the sequence is KGKFYSCTDE…EGPIYNYHVE (90 aa). The segment at 1065–1155 is dihydropyridine binding; that stretch reads RLWVNSDFNF…RAQGEQEYQN (91 aa). Ca(2+) is bound at residue Glu1091. A helical transmembrane segment spans residues 1118 to 1138; it reads ISVFFIVYIIIIAFFMMNIFV. At 1139 to 1195 the chain is on the cytoplasmic side; that stretch reads GFVIITFRAQGEQEYQNCELDKNQRQCVEYALKAQPLRRYIPKNPHQYRVWATVNSR. The stretch at 1182-1449 is one IV repeat; sequence NPHQYRVWAT…LFVAVIMDNF (268 aa). The chain crosses the membrane as a helical span at residues 1196-1214; sequence AFEYLMFLLILLNTVALAM. At 1215-1229 the chain is on the extracellular side; it reads QHYEQTAPFNYAMDI. The helical transmembrane segment at 1230 to 1249 threads the bilayer; sequence LNMVFTGLFTIEMVLKIIAF. The Cytoplasmic portion of the chain corresponds to 1250–1256; it reads KPKHYFA. The helical transmembrane segment at 1257 to 1278 threads the bilayer; the sequence is DAWNTFDALIVVGSVVDIAVTE. Over 1279 to 1295 the chain is Extracellular; the sequence is VNNGGHLGESSEDTSRI. A helical transmembrane segment spans residues 1296 to 1315; it reads SITFFRLFRVMRLVKLLSKG. Over 1316 to 1334 the chain is Cytoplasmic; that stretch reads EGIRTLLWTFIKSFQALPY. Residues 1335–1354 form a helical membrane-spanning segment; it reads VALLIAMIFFIYAVIGMQMF. Topologically, residues 1355–1421 are extracellular; it reads GLVALQDGTQ…GEEFTCGSSF (67 aa). Residues 1402-1468 form a dihydropyridine binding region; sequence RCDPESDFGP…LGPHHLDEFK (67 aa). The interval 1414 to 1457 is phenylalkylamine binding; sequence EFTCGSSFAIVYFISFFMLCAFLIINLFVAVIMDNFDYLTRDWS. A helical transmembrane segment spans residues 1422-1446; that stretch reads AIVYFISFFMLCAFLIINLFVAVIM. The Cytoplasmic portion of the chain corresponds to 1447–1982; sequence DNFDYLTRDW…EDLGDEMACV (536 aa). Disordered stretches follow at residues 1643–1729 and 1746–1778; these read VTEE…PHRR and LKGTQGQDNQNEEQELPDWTPDLDRAGRDSFEP. Residues 1644 to 1665 are compositionally biased toward acidic residues; that stretch reads TEEEEEEEEAVGQEAEEEEAEN. Polar residues-rich tracts occupy residues 1675 to 1687 and 1713 to 1724; these read DSQPQSRWNSRIS and NSRQPSVIQAGS. The span at 1767 to 1776 shows a compositional bias: basic and acidic residues; it reads DLDRAGRDSF.

The protein belongs to the calcium channel alpha-1 subunit (TC 1.A.1.11) family. CACNA1F subfamily. Voltage-dependent calcium channels are multisubunit complexes, consisting of alpha-1, alpha-2, beta and delta subunits in a 1:1:1:1 ratio. The channel activity is directed by the pore-forming and voltage-sensitive alpha-1 subunit. In many cases, this subunit is sufficient to generate voltage-sensitive calcium channel activity. The auxiliary subunits beta and alpha-2/delta linked by a disulfide bridge regulate the channel activity. Interacts (via IQ domain) with CABP4; in a calcium independent manner. As to expression, expressed in the inner and outer nuclear layers and the genglion cell layer of the retina.

The protein resides in the membrane. It carries out the reaction Ca(2+)(in) = Ca(2+)(out). Functionally, voltage-sensitive calcium channels (VSCC) mediate the entry of calcium ions into excitable cells and are also involved in a variety of calcium-dependent processes, including muscle contraction, hormone or neurotransmitter release, gene expression, cell motility, cell division and cell death. The isoform alpha-1F gives rise to L-type calcium currents. Long-lasting (L-type) calcium channels belong to the 'high-voltage activated' (HVA) group. They are blocked by dihydropyridines (DHP), phenylalkylamines, and by benzothiazepines. Activates at more negative voltages and does not undergo calcium-dependent inactivation (CDI), due to incoming calcium ions, during depolarization. The sequence is that of Voltage-dependent L-type calcium channel subunit alpha-1F from Mus musculus (Mouse).